We begin with the raw amino-acid sequence, 661 residues long: 7-beta-hydroxy-3-oxochol-24-oyl-CoA 4-desaturase (661 aa).

Gln-104 is an FMN binding site. 168-171 (HCAH) is a binding site for substrate. Tyr-173 acts as the Proton donor in catalysis. FMN is bound by residues Arg-222, Lys-298, and 320–321 (GR). The [4Fe-4S] cluster site is built by Cys-344, Cys-347, Cys-351, and Cys-363. Residues Gly-394, Glu-413, Gln-421, Lys-431, and Ala-458 each contribute to the FAD site.

In the N-terminal section; belongs to the NADH:flavin oxidoreductase/NADH oxidase family. Homotrimer. The cofactor is FMN. Requires FAD as cofactor. [4Fe-4S] cluster is required as a cofactor.

It carries out the reaction 7beta-hydroxy-3-oxochol-24-oyl-CoA + NAD(+) = 7beta-hydroxy-3-oxochol-4-en-24-oyl-CoA + NADH + H(+). It functions in the pathway lipid metabolism; bile acid degradation. With respect to regulation, activity is inhibited by sulfhydryl-reactive compounds, acriflavine, o-phenanthroline and EDTA. Its function is as follows. NADH-dependent flavin oxidoreductase. Stereo-specific NAD(H)-dependent 3-oxo-delta4-cholenoic acid oxidoreductase involved in bile acid 7beta-dehydroxylation. The chain is 7-beta-hydroxy-3-oxochol-24-oyl-CoA 4-desaturase from Clostridium scindens (strain JCM 10418 / VPI 12708).